The chain runs to 599 residues: Transferrin-binding protein B (599 aa).

A signal peptide spans 1-20 (MNNPLVNQAAMVLPVFLLSA). Residue Cys21 is the site of N-palmitoyl cysteine attachment. The S-diacylglycerol cysteine moiety is linked to residue Cys21. Residues 39-51 (MHSKPKYEDEKSQ) show a composition bias toward basic and acidic residues. 2 disordered regions span residues 39–61 (MHSK…VSEN) and 80–119 (NPKY…RGSS). Residues 52–61 (PESQQDVSEN) are compositionally biased toward polar residues. A compositionally biased stretch (basic and acidic residues) spans 107–119 (SERDELEKKRGSS).

The protein belongs to the TbpB family. Isotype I subfamily. Binds only human holo-transferrin (TF), via the TF C-terminus. Forms a large complex with TF and TbpA. Interacts via its C-terminal domain with Slam1.

It localises to the cell outer membrane. The protein localises to the cell surface. Neisseria acquires iron by extracting it from serum transferrin (TF) in its human host. Acts as a TF receptor and is required for TF utilization. Involved in the initial capture of TF. Helps select only those TF molecules that can be used as an iron source and concentrates them on the cell surface, maintaining the iron-loaded status of the TF C-terminal lobe until its delivery to TbpA. This chain is Transferrin-binding protein B (tbpB), found in Neisseria meningitidis serogroup B.